We begin with the raw amino-acid sequence, 31 residues long: Photosystem I reaction center subunit XII (31 aa).

A helical transmembrane segment spans residues 6-25 (TQILAALVVALLPAFLAFRL).

It belongs to the PsaM family.

It is found in the cellular thylakoid membrane. The chain is Photosystem I reaction center subunit XII from Synechocystis sp. (strain ATCC 27184 / PCC 6803 / Kazusa).